We begin with the raw amino-acid sequence, 128 residues long: Iron-sulfur cluster insertion protein ErpA (128 aa).

The iron-sulfur cluster site is built by cysteine 56, cysteine 120, and cysteine 122.

This sequence belongs to the HesB/IscA family. As to quaternary structure, homodimer. Iron-sulfur cluster serves as cofactor.

In terms of biological role, required for insertion of 4Fe-4S clusters for at least IspG. This Xanthomonas euvesicatoria pv. vesicatoria (strain 85-10) (Xanthomonas campestris pv. vesicatoria) protein is Iron-sulfur cluster insertion protein ErpA.